A 624-amino-acid polypeptide reads, in one-letter code: Probable potassium transport system protein Kup (624 aa).

Helical transmembrane passes span 16–36 (ALLT…SPLY), 59–79 (IISM…VMLV), 106–126 (FVAV…VITP), 147–167 (FILP…PLGT), 174–194 (FGPI…PQII), 211–231 (LIVA…LTVT), 252–272 (WFCV…ALVI), 292–312 (IPLV…VISG), 342–362 (IYMP…VLVF), 371–391 (AYGL…LIYV), 394–414 (TWWK…LLFA), and 418–438 (TKIH…IVVM).

This sequence belongs to the HAK/KUP transporter (TC 2.A.72) family.

Its subcellular location is the cell membrane. It catalyses the reaction K(+)(in) + H(+)(in) = K(+)(out) + H(+)(out). In terms of biological role, transport of potassium into the cell. Likely operates as a K(+):H(+) symporter. This is Probable potassium transport system protein Kup from Corynebacterium glutamicum (strain ATCC 13032 / DSM 20300 / JCM 1318 / BCRC 11384 / CCUG 27702 / LMG 3730 / NBRC 12168 / NCIMB 10025 / NRRL B-2784 / 534).